We begin with the raw amino-acid sequence, 634 residues long: ATP-dependent zinc metalloprotease FtsH (634 aa).

Topologically, residues 1–5 are cytoplasmic; sequence MNALK. Residues 6 to 26 traverse the membrane as a helical segment; that stretch reads NFFIWAIIIGAAIVAFNLFEG. Over 27–100 the chain is Periplasmic; that stretch reads KREFTTKVSL…VANPEPPGGW (74 aa). The chain crosses the membrane as a helical span at residues 101-121; sequence LVNVFLSWLPILFFIGIWIFL. Over 122-634 the chain is Cytoplasmic; the sequence is LRQMSGGGNV…KSEEVKEEVV (513 aa). Residue 195–202 coordinates ATP; it reads GEPGVGKT. Histidine 418 provides a ligand contact to Zn(2+). Glutamate 419 is an active-site residue. Zn(2+) contacts are provided by histidine 422 and aspartate 496. The interval 615 to 634 is disordered; the sequence is DRKSEENKELKSEEVKEEVV.

This sequence in the central section; belongs to the AAA ATPase family. The protein in the C-terminal section; belongs to the peptidase M41 family. The isolated protease domain (residues 405-634) forms a stable hexamer. Requires Zn(2+) as cofactor.

The protein resides in the cell inner membrane. In terms of biological role, acts as a processive, ATP-dependent zinc metallopeptidase for both cytoplasmic and membrane proteins. Plays a role in the quality control of integral membrane proteins. In Aquifex aeolicus (strain VF5), this protein is ATP-dependent zinc metalloprotease FtsH.